The primary structure comprises 257 residues: Thioesterase frbE (257 aa).

It belongs to the AMT4 thioesterase family.

Its pathway is antifungal biosynthesis. Its function is as follows. Thioesterase; part of the gene cluster that mediates the biosynthesis of the antifungal antibiotic FR901469, an inhibitor of beta-1,3-glucansynthase, exerting antifungal activity against the pathogenes Candida albicans and Aspergillus fumigatus. FR901469 is a cyclic depsipeptide containing 12 amino acid residues and a fatty acid chain. The NRPS frbI contains 12 modules responsible for the formation of the depsipeptide backbone which is denoted as Acyl-Thr-Ala-Tyr-Val-4OHPro-Thr-Thr-3OHPro-threo3OHGln-Gly-Thr-Orn-OH (C71H116N14O23). The PKS frbB is probably involved in the production of the hydrocarbon chain, and the acyl-CoA ligase frbC might be involved in the transport of the chain to the peptide ptoduct of frbI. Because FR901469 contains 3 hydroxylated amino acid residues, the 3 oxygenases frbA, frbH, and frbJ might be participating in amino acid hydroxylation. As no thioesterase domains were detected in frbI or frbB, the thioesterases frbD and frbE may instead release and cyclize the products of the NRPS and PKS, respectively. The protein is Thioesterase frbE of Dothideomycetidae sp. (strain 11243) (Fungal sp. (strain No.11243)).